The primary structure comprises 88 residues: Small ribosomal subunit protein uS17 (88 aa).

It belongs to the universal ribosomal protein uS17 family. In terms of assembly, part of the 30S ribosomal subunit.

In terms of biological role, one of the primary rRNA binding proteins, it binds specifically to the 5'-end of 16S ribosomal RNA. The sequence is that of Small ribosomal subunit protein uS17 from Prochlorococcus marinus (strain SARG / CCMP1375 / SS120).